We begin with the raw amino-acid sequence, 543 residues long: Allantoate permease (543 aa).

The Cytoplasmic portion of the chain corresponds to 1–80; it reads MSADASTNSN…PEEDRKLRWK (80 aa). Residues 81 to 97 traverse the membrane as a helical segment; the sequence is IDYCMFPLMCILYAVQF. Residues 98–123 lie on the Extracellular side of the membrane; that stretch reads MDKISTSSAAVMGLRTDLKMHGDQYS. Residues 124-145 traverse the membrane as a helical segment; the sequence is WVTSAFYFGYLFMNLGPVQFIF. The Cytoplasmic portion of the chain corresponds to 146-154; that stretch reads QRTSHMSKM. The helical transmembrane segment at 155–171 threads the bilayer; sequence LAVFIVIWGMLLALHAA. At 172–178 the chain is on the extracellular side; that stretch reads PTVKYPS. The helical transmembrane segment at 179–200 threads the bilayer; sequence FIVLRVLLGCAESVVTPCFTII. Residues 201 to 213 lie on the Cytoplasmic side of the membrane; the sequence is TAQYWKTEEQFTR. A helical membrane pass occupies residues 214–237; sequence VSIWFGMNGLGSILINAIAYGVYI. Over 238–248 the chain is Extracellular; that stretch reads HQDSYAIKGWR. Residues 249-269 form a helical membrane-spanning segment; that stretch reads TLFVITGVITIFIGILIFLWI. Residues 270–317 lie on the Cytoplasmic side of the membrane; the sequence is PDDPSKARFLSKREKLMVVQRIRSNQQGFGNHEIKKYQIIEALKDVRT. Residues 318-342 form a helical membrane-spanning segment; that stretch reads WLYFLFTVSSNIPNGGISSFMSILL. Topologically, residues 343 to 352 are extracellular; that stretch reads NSDFGYSSKE. A helical membrane pass occupies residues 353-377; the sequence is TLLMGLPTGAVELVGCPLFGILAVY. The Cytoplasmic segment spans residues 378–389; it reads AANKKIPFWKYK. Residues 390-411 form a helical membrane-spanning segment; it reads LSWAIFAAVLALIASCMLGFAT. Residues 412–417 are Extracellular-facing; that stretch reads NSKKAR. A helical transmembrane segment spans residues 418–435; sequence LAGAYLWYISPVSFICVL. At 436–453 the chain is on the cytoplasmic side; the sequence is SNISANSSGYSKKWTVSS. The helical transmembrane segment at 454-472 threads the bilayer; that stretch reads INLVAYAAANLAGPQTFIA. The Extracellular portion of the chain corresponds to 473-482; the sequence is KQAPKYHGAK. The chain crosses the membrane as a helical span at residues 483–504; it reads VAMVVCYAVMIVLLSILLIVNL. At 505-543 the chain is on the cytoplasmic side; the sequence is RENKRRDKIAAERGFPEETENLEFSDLTDFENPNFRYTL.

It belongs to the major facilitator superfamily. Allantoate permease family.

It localises to the membrane. Functionally, component of the allantoate transport system. The protein is Allantoate permease (DAL5) of Saccharomyces cerevisiae (strain ATCC 204508 / S288c) (Baker's yeast).